A 39-amino-acid polypeptide reads, in one-letter code: Cytochrome b559 subunit beta (39 aa).

The chain crosses the membrane as a helical span at residues 14–30; that stretch reads WLTVHGLAVPTVSFLGS. H18 serves as a coordination point for heme.

It belongs to the PsbE/PsbF family. As to quaternary structure, heterodimer of an alpha subunit and a beta subunit. PSII is composed of 1 copy each of membrane proteins PsbA, PsbB, PsbC, PsbD, PsbE, PsbF, PsbH, PsbI, PsbJ, PsbK, PsbL, PsbM, PsbT, PsbX, PsbY, PsbZ, Psb30/Ycf12, at least 3 peripheral proteins of the oxygen-evolving complex and a large number of cofactors. It forms dimeric complexes. The cofactor is heme b.

It localises to the plastid. It is found in the chloroplast thylakoid membrane. Functionally, this b-type cytochrome is tightly associated with the reaction center of photosystem II (PSII). PSII is a light-driven water:plastoquinone oxidoreductase that uses light energy to abstract electrons from H(2)O, generating O(2) and a proton gradient subsequently used for ATP formation. It consists of a core antenna complex that captures photons, and an electron transfer chain that converts photonic excitation into a charge separation. This chain is Cytochrome b559 subunit beta, found in Cucumis sativus (Cucumber).